Reading from the N-terminus, the 606-residue chain is 1-deoxy-D-xylulose-5-phosphate synthase (606 aa).

Residues histidine 63 and 104 to 106 (GHS) each bind thiamine diphosphate. Position 137 (aspartate 137) interacts with Mg(2+). Residues 138 to 139 (GS), asparagine 166, tyrosine 273, and glutamate 354 contribute to the thiamine diphosphate site. Asparagine 166 lines the Mg(2+) pocket.

This sequence belongs to the transketolase family. DXPS subfamily. In terms of assembly, homodimer. The cofactor is Mg(2+). Thiamine diphosphate is required as a cofactor.

It catalyses the reaction D-glyceraldehyde 3-phosphate + pyruvate + H(+) = 1-deoxy-D-xylulose 5-phosphate + CO2. It functions in the pathway metabolic intermediate biosynthesis; 1-deoxy-D-xylulose 5-phosphate biosynthesis; 1-deoxy-D-xylulose 5-phosphate from D-glyceraldehyde 3-phosphate and pyruvate: step 1/1. Catalyzes the acyloin condensation reaction between C atoms 2 and 3 of pyruvate and glyceraldehyde 3-phosphate to yield 1-deoxy-D-xylulose-5-phosphate (DXP). This is 1-deoxy-D-xylulose-5-phosphate synthase from Sulfurimonas denitrificans (strain ATCC 33889 / DSM 1251) (Thiomicrospira denitrificans (strain ATCC 33889 / DSM 1251)).